A 134-amino-acid polypeptide reads, in one-letter code: Mini-ribonuclease 3 (134 aa).

Residue D23 is part of the active site.

This sequence belongs to the MrnC RNase family. As to quaternary structure, homodimer. Mg(2+) serves as cofactor.

The protein resides in the cytoplasm. Functionally, involved in correct processing of both the 5' and 3' ends of 23S rRNA precursor. Processes 30S rRNA precursor transcript even in absence of ribonuclease 3 (Rnc); Rnc processes 30S rRNA into smaller rRNA precursors. The chain is Mini-ribonuclease 3 from Brevibacillus brevis (strain 47 / JCM 6285 / NBRC 100599).